Reading from the N-terminus, the 206-residue chain is Ephrin-A4 (206 aa).

The signal sequence occupies residues 1-25 (MRLLPLLRTVLWAALLGSRLPGCSS). One can recognise an Ephrin RBD domain in the interval 26–158 (LRHPIYWNSS…RLQVSVCCKE (133 aa)). Residue Asn33 is glycosylated (N-linked (GlcNAc...) asparagine). A Cell attachment site motif is present at residues 41–43 (RGD). 2 disulfides stabilise this stretch: Cys58–Cys99 and Cys86–Cys147. N-linked (GlcNAc...) asparagine glycosylation is present at Asn98. The segment at 161–180 (SSHESAHPVGSPGESGTSGW) is disordered. Ser175 is lipidated: GPI-anchor amidated serine. A propeptide spans 176 to 206 (GTSGWRGGHAPSPLCLLLLLLLPILRLLRVL) (removed in mature form).

This sequence belongs to the ephrin family. In terms of tissue distribution, expressed in myogenic progenitor cells.

Its subcellular location is the cell membrane. Cell surface GPI-bound ligand for Eph receptors, a family of receptor tyrosine kinases which are crucial for migration, repulsion and adhesion during neuronal, vascular and epithelial development. Binds promiscuously Eph receptors residing on adjacent cells, leading to contact-dependent bidirectional signaling into neighboring cells. May play a role in the interaction between activated B-lymphocytes and dendritic cells in tonsils. The chain is Ephrin-A4 (Efna4) from Mus musculus (Mouse).